We begin with the raw amino-acid sequence, 305 residues long: Insulin-like growth factor-binding protein 2 (305 aa).

The signal sequence occupies residues 1-34 (MLPRLGGPALPLLLPSLLLLLLLGAGGCGPGVRA). The 83-residue stretch at 36-118 (VLFRCPPCTP…VTGAGTCEKR (83 aa)) folds into the IGFBP N-terminal domain. Disulfide bonds link Cys40–Cys68, Cys43–Cys70, Cys51–Cys71, Cys59–Cys74, Cys82–Cys95, Cys89–Cys115, Cys207–Cys241, Cys252–Cys263, and Cys265–Cys286. The region spanning 204–286 (RTPCQQELDQ…APTIRGDPEC (83 aa)) is the Thyroglobulin type-1 domain. Positions 281–283 (RGD) match the Cell attachment site motif.

As to quaternary structure, interacts with IGF1. Interacts with IGF2. Interacts (via RGD motif) with integrin alpha5/ITGA5; this interaction induces cell migration, adhesion or apoptosis according to the context. Interacts with PTPRB; this interaction leads to PTPRB dimerization and inactivation. Cleaved by MMP9 leading to release of free IGF2 from IGFBP2-IGF2 complex, which contributes to enhance the motility and the growth of astrocytes. Post-translationally, O-glycosylated. In terms of tissue distribution, highly expressed in adult liver, but also in kidney, lung, brain, spleen, testis and ovary.

The protein resides in the secreted. Multifunctional protein that plays a critical role in regulating the availability of IGFs such as IGF1 and IGF2 to their receptors and thereby regulates IGF-mediated cellular processes including proliferation, differentiation, and apoptosis in a cell-type specific manner. Functions coordinately with receptor protein tyrosine phosphatase beta/PTPRB and the IGF1 receptor to regulate IGF1-mediated signaling by stimulating the phosphorylation of PTEN leading to its inactivation and AKT1 activation. Plays a positive role in cell migration via interaction with integrin alpha5/ITGA5 through an RGD motif. Additionally, interaction with ITGA5/ITGB1 enhances the adhesion of endothelial progenitor cells to endothelial cells. Upon mitochondrial damage, facilitates apoptosis with ITGA5 of podocytes, and then activates the phosphorylation of focal adhesion kinase (FAK)-mediated mitochondrial injury. The protein is Insulin-like growth factor-binding protein 2 (Igfbp2) of Mus musculus (Mouse).